The sequence spans 186 residues: Nuclear transcription factor Y subunit C-5 (186 aa).

The tract at residues 166–186 (QMPGAWTEEDATGANGGNGGN) is disordered.

This sequence belongs to the NFYC/HAP5 subunit family. In terms of assembly, heterotrimeric transcription factor composed of three components, NF-YA, NF-YB and NF-YC. NF-YB and NF-YC must interact and dimerize for NF-YA association and DNA binding. As to expression, expressed in inflorescences and flowers.

It localises to the nucleus. Stimulates the transcription of various genes by recognizing and binding to a CCAAT motif in promoters. The polypeptide is Nuclear transcription factor Y subunit C-5 (NFYC5) (Arabidopsis thaliana (Mouse-ear cress)).